The following is a 153-amino-acid chain: Ribonuclease K3 (153 aa).

The first 26 residues, 1-26, serve as a signal peptide directing secretion; sequence MGPDLRCFPLLLLLLGLWWSVRPLCA. Residue Asn30 is glycosylated (N-linked (GlcNAc...) asparagine). The active-site Proton acceptor is the His41. Disulfide bonds link Cys49–Cys107, Cys63–Cys117, Cys81–Cys132, and Cys88–Cys95. Asn58 is a glycosylation site (N-linked (GlcNAc...) asparagine). 64-68 is a substrate binding site; the sequence is KPQNT. A glycan (N-linked (GlcNAc...) asparagine) is linked at Asn85. Lys89 serves as a coordination point for substrate. Residue His148 is the Proton donor of the active site.

Belongs to the pancreatic ribonuclease family. Interacts (via N-terminus) with bacterial lipopolysaccharide (LPS). Kidney.

It localises to the secreted. The protein localises to the lysosome. The protein resides in the cytoplasmic granule. Its function is as follows. Ribonuclease which shows a preference for the pyrimidines uridine and cytosine. Has potent antibacterial activity against a range of Gram-positive and Gram-negative bacteria, including P.aeruginosa, A.baumanii, M.luteus, S.aureus, E.faecalis, E.faecium, S.saprophyticus and E.coli. Causes loss of bacterial membrane integrity, and also promotes agglutination of Gram-negative bacteria. Probably contributes to urinary tract sterility. Bactericidal activity is independent of RNase activity. The chain is Ribonuclease K3 (RNASE6) from Sus scrofa (Pig).